Here is a 173-residue protein sequence, read N- to C-terminus: MPLLDSFTVDHKIMNAPAVRVAKTMKTPGGDTITVFDLRFNKPNVDMMGEKGIHTLEHLFAGFIRAHLNADDVEIIDVSPMGCRTGFYMSLIGTPDEKRVADAWMKAMQDVLNVEKMEDIPELNEYQCGTYTMHSLEEAKSIAQNIIDHGIGVNKNENIALDKETLKALGNDV.

His-54, His-58, and Cys-128 together coordinate Fe cation.

The protein belongs to the LuxS family. In terms of assembly, homodimer. The cofactor is Fe cation.

The enzyme catalyses S-(5-deoxy-D-ribos-5-yl)-L-homocysteine = (S)-4,5-dihydroxypentane-2,3-dione + L-homocysteine. Functionally, involved in the synthesis of autoinducer 2 (AI-2) which is secreted by bacteria and is used to communicate both the cell density and the metabolic potential of the environment. The regulation of gene expression in response to changes in cell density is called quorum sensing. Catalyzes the transformation of S-ribosylhomocysteine (RHC) to homocysteine (HC) and 4,5-dihydroxy-2,3-pentadione (DPD). The chain is S-ribosylhomocysteine lyase from Hydrogenovibrio crunogenus (strain DSM 25203 / XCL-2) (Thiomicrospira crunogena).